The sequence spans 109 residues: Putative pterin-4-alpha-carbinolamine dehydratase (109 aa).

The protein belongs to the pterin-4-alpha-carbinolamine dehydratase family.

It catalyses the reaction (4aS,6R)-4a-hydroxy-L-erythro-5,6,7,8-tetrahydrobiopterin = (6R)-L-erythro-6,7-dihydrobiopterin + H2O. This is Putative pterin-4-alpha-carbinolamine dehydratase from Rickettsia canadensis (strain McKiel).